The primary structure comprises 430 residues: MSNGGTPRSLPSSGQKSIQEICHPLSAEESARSRSPDVLNPGEKDLSLPNGTPVDTSSPASSSSLLNRLQLDDDLDAETRDLFVTVDDPKKHVSTMETYITYRVCTKTTRTEFDLPEYSVRRRYQDFDWLRIKLEDSQPTHLIPPLPEKFVMKGVVDRFSEEFVETRRKALDKFLKRVADHPVLSFNEHFNAFLSAKDLNKRQGLALLTKMGESVKYVTGGYKLRGRPVEFAAMGEYLDMFTQKLGTIDRIAQRIIKEQTEFLMELREYGPVYSSWSSFEEDLHEPLEGVSGCVSNCSSALEELTEDMSEDFLPVLREYVLYIESMKNVLKKRDQVQAEYETKLEAVVFREDKKTPMPTDVEKCQDRVECFNADLKADWDRWQNNKRQDFRQLLTGMADKNIQYYEKCLAAWESLIPLLQDKQDAKGETN.

Residues 1 to 18 (MSNGGTPRSLPSSGQKSI) are compositionally biased toward polar residues. A disordered region spans residues 1 to 66 (MSNGGTPRSL…SSPASSSSLL (66 aa)). The span at 57 to 66 (SSPASSSSLL) shows a compositional bias: low complexity. The 122-residue stretch at 80 to 201 (RDLFVTVDDP…AFLSAKDLNK (122 aa)) folds into the PX domain. Residues Arg-123, Gln-125, Lys-153, and Arg-167 each contribute to the a 1,2-diacyl-sn-glycero-3-phospho-(1D-myo-inositol-3-phosphate) site. Residues 223–428 (KLRGRPVEFA…LQDKQDAKGE (206 aa)) form the BAR domain.

The protein belongs to the sorting nexin family.

The protein resides in the early endosome membrane. Involved in the regulation of endocytosis and in several stages of intracellular trafficking. Together with snx4, involved in autophagosome assembly. This Danio rerio (Zebrafish) protein is Sorting nexin-30 (snx30).